A 309-amino-acid polypeptide reads, in one-letter code: NAD-dependent protein deacylase sirtuin-5, mitochondrial (309 aa).

Residues M1–P35 constitute a mitochondrion transit peptide. The Deacetylase sirtuin-type domain occupies S36–E306. Residue G57–W76 coordinates NAD(+). The substrate site is built by Y101 and R104. Q139–D142 lines the NAD(+) pocket. The active-site Proton acceptor is the H157. Zn(2+) is bound by residues C165, C168, C206, and C211. NAD(+)-binding positions include G248–S250, N274–E276, and C292.

Belongs to the sirtuin family. Class III subfamily. It depends on Zn(2+) as a cofactor.

It localises to the mitochondrion. The protein resides in the cytoplasm. It is found in the cytosol. The protein localises to the nucleus. It catalyses the reaction N(6)-malonyl-L-lysyl-[protein] + NAD(+) + H2O = 2''-O-malonyl-ADP-D-ribose + nicotinamide + L-lysyl-[protein]. The catalysed reaction is N(6)-succinyl-L-lysyl-[protein] + NAD(+) + H2O = 2''-O-succinyl-ADP-D-ribose + nicotinamide + L-lysyl-[protein]. The enzyme catalyses N(6)-glutaryl-L-lysyl-[protein] + NAD(+) + H2O = 2''-O-glutaryl-ADP-D-ribose + nicotinamide + L-lysyl-[protein]. Functionally, NAD-dependent lysine demalonylase, desuccinylase and deglutarylase that specifically removes malonyl, succinyl and glutaryl groups on target proteins. Has weak NAD-dependent protein deacetylase activity; however this activity may not be physiologically relevant in vivo. The sequence is that of NAD-dependent protein deacylase sirtuin-5, mitochondrial (sirt5) from Xenopus tropicalis (Western clawed frog).